The sequence spans 170 residues: MQVDEQRLHFRDAMASLAAAVNIVTTAGHAGRCGITATAVCSVTDTPPSVMVCINANSAMNPVFQGNGRLCINVLNHEQELMARHFAGMTGMAMEERFHQPCWQNGPLGQPVLNGALAGLEGEISEVQTIGTHLVYLVAIKNIILSQDGHGLIYFKRRFHPVRLEMEAPV.

Belongs to the non-flavoprotein flavin reductase family. HpaC subfamily. Homodimer. 4-HPA 3-monooxygenase consists of a reductase component HpaC and an oxygenase component HpaB.

The catalysed reaction is a reduced flavin + NAD(+) = an oxidized flavin + NADH + 2 H(+). Its pathway is aromatic compound metabolism; 4-hydroxyphenylacetate degradation; pyruvate and succinate semialdehyde from 4-hydroxyphenylacetate: step 1/7. Catalyzes the reduction of free flavins (FMN, FAD and riboflavin) by NADH. Subsequently, the reduced flavins diffuse to the large HpaB component or to other electron acceptors such as cytochrome c and Fe(3+) ion. This is 4-hydroxyphenylacetate 3-monooxygenase reductase component (hpaC) from Salmonella dublin.